The chain runs to 351 residues: MRTTIPVRLAERSYDVLVGPGVRAALPEVVRRLGARRAVVVSARPADWVPGTGVETLLLQARDGEPTKRLSTVEELCGEFARFGLTRSDVVVSCGGGTTTDVVGLAAALYHRGVAVVHLPTSLLAQVDASVGGKTAVNLPAGKNLVGAYWQPSAVLCDTDYLTTLPRREVLNGLGEIARCHFIGAPDLRGRSRPEQIAASVTLKAGIVAQDERDTGPRHLLNYGHTLGHALEIATGFALRHGEAVAIGTVFAGRLAGALGRLDQSGVDEHLAVVRHYGLPAALPADVDPAVLVRQMYRDKKAITGLAFVLAGPRGAELVSDVPAPVVTDVLDRMPRDSLENLVGTTEAAAP.

NAD(+) is bound by residues Glu-65 to Lys-68, Gly-97 to Asp-101, Thr-121 to Ser-122, Lys-134, Lys-143, and Tyr-161 to Thr-164. Zn(2+) contacts are provided by Glu-176, His-225, and His-241.

The protein belongs to the sugar phosphate cyclases superfamily. aDHQS family. The cofactor is NAD(+). Co(2+) serves as cofactor. It depends on Zn(2+) as a cofactor.

In terms of biological role, may catalyze the conversion of 3,4-dideoxy-4-amino-D-arabino-heptulosonate 7-phosphate (aDAHP) to 5-deoxy-5-amino-3-dehydroquinate (aDHQ). Probably involved in the formation of 3-amino-5-hydroxybenzoic acid (AHBA), the precursor of rifamycin and related ansamycins. The polypeptide is Putative aminodehydroquinate synthase (Amycolatopsis mediterranei (strain S699) (Nocardia mediterranei)).